Reading from the N-terminus, the 338-residue chain is tRNA-cytidine(32) 2-sulfurtransferase (338 aa).

The PP-loop motif signature appears at serine 86–serine 91. [4Fe-4S] cluster-binding residues include cysteine 161, cysteine 164, and cysteine 252.

Belongs to the TtcA family. As to quaternary structure, homodimer. Mg(2+) serves as cofactor. The cofactor is [4Fe-4S] cluster.

It localises to the cytoplasm. It catalyses the reaction cytidine(32) in tRNA + S-sulfanyl-L-cysteinyl-[cysteine desulfurase] + AH2 + ATP = 2-thiocytidine(32) in tRNA + L-cysteinyl-[cysteine desulfurase] + A + AMP + diphosphate + H(+). The protein operates within tRNA modification. Its function is as follows. Catalyzes the ATP-dependent 2-thiolation of cytidine in position 32 of tRNA, to form 2-thiocytidine (s(2)C32). The sulfur atoms are provided by the cysteine/cysteine desulfurase (IscS) system. The protein is tRNA-cytidine(32) 2-sulfurtransferase of Albidiferax ferrireducens (strain ATCC BAA-621 / DSM 15236 / T118) (Rhodoferax ferrireducens).